A 190-amino-acid polypeptide reads, in one-letter code: GTP cyclohydrolase 1 (190 aa).

Residues Cys75, His78, and Cys146 each contribute to the Zn(2+) site.

This sequence belongs to the GTP cyclohydrolase I family. In terms of assembly, toroid-shaped homodecamer, composed of two pentamers of five dimers.

It catalyses the reaction GTP + H2O = 7,8-dihydroneopterin 3'-triphosphate + formate + H(+). The protein operates within cofactor biosynthesis; 7,8-dihydroneopterin triphosphate biosynthesis; 7,8-dihydroneopterin triphosphate from GTP: step 1/1. This chain is GTP cyclohydrolase 1, found in Campylobacter jejuni (strain RM1221).